We begin with the raw amino-acid sequence, 465 residues long: tRNA modification GTPase MnmE (465 aa).

Arg-27, Glu-91, and Arg-130 together coordinate (6S)-5-formyl-5,6,7,8-tetrahydrofolate. Residues 227–386 enclose the TrmE-type G domain; the sequence is GLSTAIIGRP…LEAKIADLFF (160 aa). Residue Asn-237 coordinates K(+). Residues 237 to 242, 256 to 262, and 281 to 284 contribute to the GTP site; these read NVGKSS, TDIAGTT, and DTAG. Residue Ser-241 participates in Mg(2+) binding. The K(+) site is built by Thr-256, Ile-258, and Thr-261. Position 262 (Thr-262) interacts with Mg(2+). Lys-465 is a binding site for (6S)-5-formyl-5,6,7,8-tetrahydrofolate.

Belongs to the TRAFAC class TrmE-Era-EngA-EngB-Septin-like GTPase superfamily. TrmE GTPase family. Homodimer. Heterotetramer of two MnmE and two MnmG subunits. It depends on K(+) as a cofactor.

It localises to the cytoplasm. In terms of biological role, exhibits a very high intrinsic GTPase hydrolysis rate. Involved in the addition of a carboxymethylaminomethyl (cmnm) group at the wobble position (U34) of certain tRNAs, forming tRNA-cmnm(5)s(2)U34. This is tRNA modification GTPase MnmE from Enterococcus faecalis (strain ATCC 700802 / V583).